Here is a 779-residue protein sequence, read N- to C-terminus: Phosphoribosylformylglycinamidine synthase subunit PurL (779 aa).

His-52 is an active-site residue. ATP-binding residues include Tyr-55 and Lys-94. Glu-96 serves as a coordination point for Mg(2+). Residues 97–100 and Arg-119 each bind substrate; that span reads SHNH. Residue His-98 is the Proton acceptor of the active site. Residue Asp-120 coordinates Mg(2+). Gln-243 is a binding site for substrate. Position 271 (Asp-271) interacts with Mg(2+). A substrate-binding site is contributed by 315–317; it reads ESQ. Asn-523 and Gly-560 together coordinate ATP. Asn-561 serves as a coordination point for Mg(2+). Substrate is bound at residue Ser-563.

The protein belongs to the FGAMS family. As to quaternary structure, monomer. Part of the FGAM synthase complex composed of 1 PurL, 1 PurQ and 2 PurS subunits.

Its subcellular location is the cytoplasm. The catalysed reaction is N(2)-formyl-N(1)-(5-phospho-beta-D-ribosyl)glycinamide + L-glutamine + ATP + H2O = 2-formamido-N(1)-(5-O-phospho-beta-D-ribosyl)acetamidine + L-glutamate + ADP + phosphate + H(+). It functions in the pathway purine metabolism; IMP biosynthesis via de novo pathway; 5-amino-1-(5-phospho-D-ribosyl)imidazole from N(2)-formyl-N(1)-(5-phospho-D-ribosyl)glycinamide: step 1/2. Functionally, part of the phosphoribosylformylglycinamidine synthase complex involved in the purines biosynthetic pathway. Catalyzes the ATP-dependent conversion of formylglycinamide ribonucleotide (FGAR) and glutamine to yield formylglycinamidine ribonucleotide (FGAM) and glutamate. The FGAM synthase complex is composed of three subunits. PurQ produces an ammonia molecule by converting glutamine to glutamate. PurL transfers the ammonia molecule to FGAR to form FGAM in an ATP-dependent manner. PurS interacts with PurQ and PurL and is thought to assist in the transfer of the ammonia molecule from PurQ to PurL. The chain is Phosphoribosylformylglycinamidine synthase subunit PurL from Prochlorococcus marinus (strain MIT 9515).